Reading from the N-terminus, the 208-residue chain is Small ribosomal subunit protein uS4 (208 aa).

Residues 98–163 (QRLDNVVYRM…NPQITRAIEL (66 aa)) form the S4 RNA-binding domain.

This sequence belongs to the universal ribosomal protein uS4 family. As to quaternary structure, part of the 30S ribosomal subunit. Contacts protein S5. The interaction surface between S4 and S5 is involved in control of translational fidelity.

Functionally, one of the primary rRNA binding proteins, it binds directly to 16S rRNA where it nucleates assembly of the body of the 30S subunit. In terms of biological role, with S5 and S12 plays an important role in translational accuracy. The sequence is that of Small ribosomal subunit protein uS4 from Campylobacter jejuni (strain RM1221).